The following is a 66-amino-acid chain: Large ribosomal subunit protein bL33c (66 aa).

It belongs to the bacterial ribosomal protein bL33 family.

Its subcellular location is the plastid. The protein resides in the chloroplast. This Calycanthus floridus var. glaucus (Eastern sweetshrub) protein is Large ribosomal subunit protein bL33c.